The primary structure comprises 294 residues: Ribosomal protein L11 methyltransferase (294 aa).

Positions 144, 165, 187, and 229 each coordinate S-adenosyl-L-methionine.

Belongs to the methyltransferase superfamily. PrmA family.

Its subcellular location is the cytoplasm. The enzyme catalyses L-lysyl-[protein] + 3 S-adenosyl-L-methionine = N(6),N(6),N(6)-trimethyl-L-lysyl-[protein] + 3 S-adenosyl-L-homocysteine + 3 H(+). Its function is as follows. Methylates ribosomal protein L11. This chain is Ribosomal protein L11 methyltransferase, found in Pseudomonas paraeruginosa (strain DSM 24068 / PA7) (Pseudomonas aeruginosa (strain PA7)).